Here is a 391-residue protein sequence, read N- to C-terminus: Casein kinase II subunit alpha 3 (391 aa).

One can recognise a Protein kinase domain in the interval Tyr-39–Phe-324. ATP contacts are provided by residues Leu-45–Val-53 and Lys-68. The active-site Proton acceptor is the Asp-156.

It belongs to the protein kinase superfamily. Ser/Thr protein kinase family. CK2 subfamily. As to quaternary structure, heterotetramer composed of two catalytic subunits (alpha chain and/or alpha' chain) and two regulatory subunits (beta chains). Interacts with PML. In terms of tissue distribution, detected in blood platelets and megakaryocyte cell lines. Poorly expressed in lung. Highly expressed in lung tumor tissues.

The enzyme catalyses L-seryl-[protein] + ATP = O-phospho-L-seryl-[protein] + ADP + H(+). It carries out the reaction L-threonyl-[protein] + ATP = O-phospho-L-threonyl-[protein] + ADP + H(+). Functionally, probable catalytic subunit of a constitutively active serine/threonine-protein kinase complex that phosphorylates a large number of substrates containing acidic residues C-terminal to the phosphorylated serine or threonine. Amplification-dependent oncogene; promotes cell proliferation and tumorigenesis by down-regulating expression of the tumor suppressor protein, PML. May play a role in the pathogenesis of the lung cancer development and progression. This is Casein kinase II subunit alpha 3 (CSNK2A3) from Homo sapiens (Human).